A 285-amino-acid polypeptide reads, in one-letter code: MNNFLSCPAIPFPNFLDPIIIQLGPIALHWYGLGYVVGILFSWWYVQKLSHKKSLWYANYPPLNAEKASDFVVWAALGIVVGGRLGQVLIWDPTYYFNHPSSIIAVWDGGMSFHGGLIGTTIAIIWFARKHNINIWAMFDTIAAGAPFGIGVVRICNFINQELWGSVTNVPWAVCFSLDPQYLPRHPSQLYEALMEGFLLFIVLAFIIFAFKAFKRPGTVAGTFIISYGIARTISEIFRVPQEDPEWFSALFHGSGFTYGMALSLPMILFGFYAIFRAFRNHFIK.

4 helical membrane passes run 26-46, 71-91, 107-127, and 133-153; these read IALHWYGLGYVVGILFSWWYV, FVVWAALGIVVGGRLGQVLIW, WDGGMSFHGGLIGTTIAIIWF, and INIWAMFDTIAAGAPFGIGVV. Residue arginine 154 coordinates a 1,2-diacyl-sn-glycero-3-phospho-(1'-sn-glycerol). Helical transmembrane passes span 194 to 214, 218 to 238, and 256 to 276; these read LMEGFLLFIVLAFIIFAFKAF, GTVAGTFIISYGIARTISEIF, and GFTYGMALSLPMILFGFYAIF.

This sequence belongs to the Lgt family.

It localises to the cell inner membrane. It carries out the reaction L-cysteinyl-[prolipoprotein] + a 1,2-diacyl-sn-glycero-3-phospho-(1'-sn-glycerol) = an S-1,2-diacyl-sn-glyceryl-L-cysteinyl-[prolipoprotein] + sn-glycerol 1-phosphate + H(+). The protein operates within protein modification; lipoprotein biosynthesis (diacylglyceryl transfer). Catalyzes the transfer of the diacylglyceryl group from phosphatidylglycerol to the sulfhydryl group of the N-terminal cysteine of a prolipoprotein, the first step in the formation of mature lipoproteins. The sequence is that of Phosphatidylglycerol--prolipoprotein diacylglyceryl transferase from Bartonella bacilliformis (strain ATCC 35685 / KC583 / Herrer 020/F12,63).